The sequence spans 186 residues: Ribosome-recycling factor (186 aa).

The protein belongs to the RRF family.

Its subcellular location is the cytoplasm. Functionally, responsible for the release of ribosomes from messenger RNA at the termination of protein biosynthesis. May increase the efficiency of translation by recycling ribosomes from one round of translation to another. This chain is Ribosome-recycling factor, found in Cupriavidus metallidurans (strain ATCC 43123 / DSM 2839 / NBRC 102507 / CH34) (Ralstonia metallidurans).